The sequence spans 128 residues: Large ribosomal subunit protein bL17 (128 aa).

Belongs to the bacterial ribosomal protein bL17 family. As to quaternary structure, part of the 50S ribosomal subunit. Contacts protein L32.

This is Large ribosomal subunit protein bL17 from Haemophilus influenzae (strain 86-028NP).